The sequence spans 200 residues: Large ribosomal subunit protein bL25 (200 aa).

This sequence belongs to the bacterial ribosomal protein bL25 family. CTC subfamily. Part of the 50S ribosomal subunit; part of the 5S rRNA/L5/L18/L25 subcomplex. Contacts the 5S rRNA. Binds to the 5S rRNA independently of L5 and L18.

In terms of biological role, this is one of the proteins that binds to the 5S RNA in the ribosome where it forms part of the central protuberance. The protein is Large ribosomal subunit protein bL25 of Pseudomonas fluorescens (strain SBW25).